Reading from the N-terminus, the 100-residue chain is uncharacterized protein (100 aa).

Residues Asp65 to Pro91 are compositionally biased toward basic and acidic residues. A disordered region spans residues Asp65–Lys100.

The protein belongs to the chlamydial CPn_0121/CT_031/TC_0300 family.

This is an uncharacterized protein from Chlamydia trachomatis serovar D (strain ATCC VR-885 / DSM 19411 / UW-3/Cx).